Here is a 327-residue protein sequence, read N- to C-terminus: DNA-directed RNA polymerase subunit alpha (327 aa).

The interval 1–233 is alpha N-terminal domain (alpha-NTD); that stretch reads MVREKVKVST…NLFIPFLHVE (233 aa). The segment at 267–327 is alpha C-terminal domain (alpha-CTD); the sequence is LAFQYIFIDQ…KKILDILEKK (61 aa).

It belongs to the RNA polymerase alpha chain family. In plastids the minimal PEP RNA polymerase catalytic core is composed of four subunits: alpha, beta, beta', and beta''. When a (nuclear-encoded) sigma factor is associated with the core the holoenzyme is formed, which can initiate transcription.

The protein localises to the plastid. It localises to the chloroplast. It carries out the reaction RNA(n) + a ribonucleoside 5'-triphosphate = RNA(n+1) + diphosphate. Its function is as follows. DNA-dependent RNA polymerase catalyzes the transcription of DNA into RNA using the four ribonucleoside triphosphates as substrates. This is DNA-directed RNA polymerase subunit alpha from Lobularia maritima (Sweet alyssum).